Consider the following 216-residue polypeptide: N-(5'-phosphoribosyl)anthranilate isomerase (216 aa).

The protein belongs to the TrpF family.

It carries out the reaction N-(5-phospho-beta-D-ribosyl)anthranilate = 1-(2-carboxyphenylamino)-1-deoxy-D-ribulose 5-phosphate. It functions in the pathway amino-acid biosynthesis; L-tryptophan biosynthesis; L-tryptophan from chorismate: step 3/5. This Methanopyrus kandleri (strain AV19 / DSM 6324 / JCM 9639 / NBRC 100938) protein is N-(5'-phosphoribosyl)anthranilate isomerase.